Here is a 209-residue protein sequence, read N- to C-terminus: uncharacterized protein (209 aa).

A signal peptide spans 1–17 (MKRLVTGLLALSLFLAA). The disordered stretch occupies residues 17 to 105 (ACGQDSDQQK…SNNQANNNQK (89 aa)). A lipid anchor (N-palmitoyl cysteine) is attached at Cys18. Residue Cys18 is the site of S-diacylglycerol cysteine attachment. Residues 23–70 (DQQKDSNKEKDDKAKTEQQDEKTNDSSKDKKDKKDDSKDVNKDNKDNS) are compositionally biased toward basic and acidic residues. Over residues 71–105 (ANDNQQQSNSNATNNDQNQTNNNQSSNNQANNNQK) the composition is skewed to low complexity.

It localises to the cell membrane. This is an uncharacterized protein from Staphylococcus aureus (strain bovine RF122 / ET3-1).